The primary structure comprises 101 residues: Putative UPF0377 protein YBL108W (101 aa).

The protein belongs to the UPF0377 family.

The sequence is that of Putative UPF0377 protein YBL108W from Saccharomyces cerevisiae (strain ATCC 204508 / S288c) (Baker's yeast).